The chain runs to 193 residues: Ribosomal RNA large subunit methyltransferase E (193 aa).

The S-adenosyl-L-methionine site is built by glycine 49, phenylalanine 51, aspartate 69, aspartate 86, and aspartate 106. Lysine 146 acts as the Proton acceptor in catalysis.

This sequence belongs to the class I-like SAM-binding methyltransferase superfamily. RNA methyltransferase RlmE family.

It localises to the cytoplasm. The catalysed reaction is uridine(2552) in 23S rRNA + S-adenosyl-L-methionine = 2'-O-methyluridine(2552) in 23S rRNA + S-adenosyl-L-homocysteine + H(+). Its function is as follows. Specifically methylates the uridine in position 2552 of 23S rRNA at the 2'-O position of the ribose in the fully assembled 50S ribosomal subunit. This chain is Ribosomal RNA large subunit methyltransferase E, found in Brachyspira hyodysenteriae (strain ATCC 49526 / WA1).